The primary structure comprises 470 residues: Dendritic cell-specific transmembrane protein (470 aa).

Residues 1 to 33 (MRLWTLGTSIFLRLWGTYVFPRSPSWLDFIQHL) are Cytoplasmic-facing. The chain crosses the membrane as a helical span at residues 34–54 (GVCCFVAFLSVSLFSAAFYWI). Residue leucine 55 is a topological domain, extracellular. The chain crosses the membrane as a helical span at residues 56–76 (PPVALLSSVWMITCVFLCCSK). Residues 77 to 97 (RARCFILLAVLSCGLREGRNA) are Cytoplasmic-facing. The chain crosses the membrane as a helical span at residues 98 to 118 (LIAAGTGVVIFGHVENIFYNF). Over 119-209 (RGLLDSMTCN…MVVTTELLTS (91 aa)) the chain is Extracellular. The helical transmembrane segment at 210 to 230 (VGQKLLALAGLLLILVSTGLF) threads the bilayer. Residues 231 to 292 (LKRFLGPCGW…LQLTPKEKKT (62 aa)) lie on the Cytoplasmic side of the membrane. The chain crosses the membrane as a helical span at residues 293–313 (LGLFFLPVLTYLYMWVLFAAV). Over 314 to 376 (DYLLYRLISS…PKPRLSVSET (63 aa)) the chain is Extracellular. Residues 377–397 (WVPLSIILLTLIILGLLSSML) traverse the membrane as a helical segment. Residues 398-470 (MQLKILVSVS…QTIPANEDDL (73 aa)) are Cytoplasmic-facing.

Interacts with CREB3. Monomer. Homodimer. Isoform 1 interacts (via the C-terminus cytoplasmic tail) with OS9 isoform 1 (via the C-terminus tail); the interaction induces DCSTAMP redistribution to the endoplasmic reticulum-Golgi intermediate compartment. Isoform 1 interacts (via the C-terminus cytoplasmic tail) with OS9 isoform 2 (via the C-terminus tail). Glycosylated. As to expression, expressed in macrophages and bone marrow dendritic cells (BM-DC). Weakly expressed in the spleen and lymph node. Highly expressed in multi-nuclear osteoclasts compared to mono-nuclear macrophages. Expressed in foreign body giant cells (FBGCs). Isoform 1 and isoform 2 are expressed in osteoclasts.

It is found in the cell membrane. The protein localises to the endoplasmic reticulum membrane. The protein resides in the endoplasmic reticulum-Golgi intermediate compartment membrane. It localises to the endosome. Its function is as follows. Probable cell surface receptor that plays several roles in cellular fusion, cell differentiation, bone and immune homeostasis. Plays a role in TNFSF11-mediated osteoclastogenesis. Cooperates with OCSTAMP in modulating cell-cell fusion in both osteoclasts and foreign body giant cells (FBGCs). Participates in osteoclast bone resorption. Involved in inducing the expression of tartrate-resistant acid phosphatase in osteoclast precursors. Plays a role in haematopoietic stem cell differentiation of bone marrow cells toward the myeloid lineage. Inhibits the development of neutrophilic granulocytes. Plays also a role in the regulation of dendritic cell (DC) antigen presentation activity by controlling phagocytic activity. Involved in the maintenance of immune self-tolerance and avoidance of autoimmune reactions. This is Dendritic cell-specific transmembrane protein (Dcstamp) from Mus musculus (Mouse).